The sequence spans 86 residues: RNA-binding protein Hfq (86 aa).

The Sm domain occupies 9–68; it reads DPYLNTLRKEKVPVSIYLVNGIKLQGQIESFDQFVVLLKNTVSQMVYKHAISTVVPARPV. The disordered stretch occupies residues 66–86; it reads RPVRLPSPSDAEHGDSEPGNA. Basic and acidic residues predominate over residues 75–86; sequence DAEHGDSEPGNA.

Belongs to the Hfq family. As to quaternary structure, homohexamer.

Its function is as follows. RNA chaperone that binds small regulatory RNA (sRNAs) and mRNAs to facilitate mRNA translational regulation in response to envelope stress, environmental stress and changes in metabolite concentrations. Also binds with high specificity to tRNAs. This Pseudomonas entomophila (strain L48) protein is RNA-binding protein Hfq.